The sequence spans 191 residues: Protein YceI (191 aa).

A signal peptide spans 1 to 22; that stretch reads MKKNLLGFTFASLLFTTGSAVA.

This sequence belongs to the UPF0312 family. Type 1 subfamily.

Its subcellular location is the periplasm. This chain is Protein YceI, found in Salmonella agona (strain SL483).